A 219-amino-acid polypeptide reads, in one-letter code: MFSSLLDLRVHRVYHISTWFGQVRESYRKPPTSTLVNGFGNHVGPRTSERELTYGVFGEDGKLTKLCIGRYVEFAPRLDLKSLSSCSPSAYLAFMIDIDIIRDGRTVHLLHWYQPDLVLAHKTHELVQTCSDRKGALYGAPAPPGGSSHRYVELVFQQPLNFTFPESFEHYLEPTIPARLFFNITEFAAAAELGNPVAANYFTVLGTRTSTEEQQIIEL.

It belongs to the tstN family.

Functionally, phosphatidylethanolamine-binding protein; part of the gene cluster that mediates the biosynthesis of the antihypercholesterolemic agents phomoidrides which are dimeric anhydrides. Within the pathway, phiN is not essential for dimerization and its function has still to be determined. The pathway begins with the highly reducing polyketide synthase phiA that catalyzes the formation of a C12-fatty acyl-ACP, starting from one acetate and 5 malonate units. The hydrolase phiM is involved in the release of the C12-fatty acyl chain from phiA. The alkylcitrate synthase (ACS) phiJ and the alkylcitrate dehydratase (ACDH) phiI then give rise to decarboxylated monomeric anhydrides by coupling the C12-fatty acyl chain with oxalacetic acid. The cyclase phiC is responsible for the dimerization of the monomeric anhydrides which leads to the production of prephomoidride that contains the characteristic bicyclo[4.3.1]deca-1,6-diene system of phomoidrides. Iterative oxidation catalyzed by the alpha-ketoglutarate-dependent dioxygenase phiK produced then phomoidride A. Finally, the methyltransferase phiE converts phomoidride A to phomoidride B via an acetalization reaction. The phosphatidylethanolamine-binding protein phiB and phiN are not essential for dimerization and their functions have still to be determined. This Fungal sp. (strain ATCC 74256) protein is Phomoidride biosynthesis cluster protein N.